Consider the following 297-residue polypeptide: NADPH-dependent 1-acyldihydroxyacetone phosphate reductase (297 aa).

Residues 16–20 carry the GXSXG motif; the sequence is GASGG. Catalysis depends on S18, which acts as the Nucleophile; for lipase activity. NADP(+) is bound by residues I21, D64, N93, R126, Y157, K161, V190, and T192. Y157 serves as the catalytic Proton acceptor. Residue K161 is the Lowers pKa of active site Tyr of the active site.

The protein belongs to the short-chain dehydrogenases/reductases (SDR) family.

It localises to the lipid droplet. The protein localises to the mitochondrion outer membrane. It is found in the endoplasmic reticulum. It catalyses the reaction a 1-acylglycerone 3-phosphate + NADPH + H(+) = a 1-acyl-sn-glycero-3-phosphate + NADP(+). It carries out the reaction 1-hexadecanoyl-sn-glycero-3-phosphate + NADP(+) = 1-hexadecanoylglycerone 3-phosphate + NADPH + H(+). The enzyme catalyses a triacylglycerol + H2O = a diacylglycerol + a fatty acid + H(+). The catalysed reaction is 1,2,3-tri-(9Z-octadecenoyl)-glycerol + H2O = di-(9Z)-octadecenoylglycerol + (9Z)-octadecenoate + H(+). Inhibited by divalent cations and N-ethylmaleimide. Activity is reduced under anaerobic growth conditions. In terms of biological role, can convert acyl and alkyl dihydroxyacetone-phosphate (DHAP) into glycerolipids and ether lipids, respectively. Required for the biosynthesis of phosphatidic acid via the DHAP pathway, where it reduces 1-acyl DHAP to lysophosphatidic acid (LPA). Also has triacylglycerol (TAG) lipase activity. Involved in the mobilization of the non-polar storage lipids triacylglycerols (TAGs) from lipid particles by hydrolysis of TAGs. Required for spore germination. Plays a role in cell wall biogenesis, but this effect may be indirect by affecting the activities of cell wall synthesis enzymes. Lipolysis of TAG by AYR1 is essential for starvation-induced autophagy. Forms an NADPH-regulated cation-selective channel in the mitochondrial outer membrane. In Saccharomyces cerevisiae (strain ATCC 204508 / S288c) (Baker's yeast), this protein is NADPH-dependent 1-acyldihydroxyacetone phosphate reductase.